A 414-amino-acid polypeptide reads, in one-letter code: Serine/threonine transporter SstT (414 aa).

8 helical membrane passes run 22-42, 54-74, 89-109, 148-168, 189-209, 223-243, 305-325, and 337-357; these read GLVL…TIGF, IFVK…VMAA, IIVL…IAGF, AIFK…GLAL, IVHV…AETL, LLAV…PILV, MAGA…TLGL, and IVAA…LLLI.

This sequence belongs to the dicarboxylate/amino acid:cation symporter (DAACS) (TC 2.A.23) family.

The protein resides in the cell inner membrane. The enzyme catalyses L-serine(in) + Na(+)(in) = L-serine(out) + Na(+)(out). It catalyses the reaction L-threonine(in) + Na(+)(in) = L-threonine(out) + Na(+)(out). Its function is as follows. Involved in the import of serine and threonine into the cell, with the concomitant import of sodium (symport system). This Haemophilus influenzae (strain PittGG) protein is Serine/threonine transporter SstT.